The sequence spans 254 residues: Alcohol dehydrogenase 1 (254 aa).

Position 10-33 (Phe-10–Leu-33) interacts with NAD(+). Ser-138 is a binding site for substrate. Tyr-151 acts as the Proton acceptor in catalysis.

This sequence belongs to the short-chain dehydrogenases/reductases (SDR) family. As to quaternary structure, homodimer.

The catalysed reaction is a primary alcohol + NAD(+) = an aldehyde + NADH + H(+). It catalyses the reaction a secondary alcohol + NAD(+) = a ketone + NADH + H(+). This Drosophila hydei (Fruit fly) protein is Alcohol dehydrogenase 1 (Adh1).